Reading from the N-terminus, the 268-residue chain is uncharacterized protein (268 aa).

This is an uncharacterized protein from Haemophilus influenzae (strain ATCC 51907 / DSM 11121 / KW20 / Rd).